We begin with the raw amino-acid sequence, 208 residues long: Thymidylate kinase (208 aa).

Residue 10-17 (GIDGSGKS) participates in ATP binding.

Belongs to the thymidylate kinase family.

The catalysed reaction is dTMP + ATP = dTDP + ADP. Its function is as follows. Phosphorylation of dTMP to form dTDP in both de novo and salvage pathways of dTTP synthesis. The chain is Thymidylate kinase from Jannaschia sp. (strain CCS1).